Reading from the N-terminus, the 352-residue chain is Protein RecA (352 aa).

67–74 (GPESSGKT) contacts ATP. A disordered region spans residues 333 to 352 (DSTPDFAVDGNDAEETEQDF). Acidic residues predominate over residues 343-352 (NDAEETEQDF).

Belongs to the RecA family.

The protein resides in the cytoplasm. Functionally, can catalyze the hydrolysis of ATP in the presence of single-stranded DNA, the ATP-dependent uptake of single-stranded DNA by duplex DNA, and the ATP-dependent hybridization of homologous single-stranded DNAs. It interacts with LexA causing its activation and leading to its autocatalytic cleavage. The sequence is that of Protein RecA from Klebsiella pneumoniae (strain 342).